The following is a 265-amino-acid chain: Chorismate mutase 2 (265 aa).

Positions 10–265 (GSGCSNVLSL…EVEYLLRRLD (256 aa)) constitute a Chorismate mutase domain.

In terms of assembly, homodimer. In terms of tissue distribution, expressed in roots, stems, cauline leaves and flowers, and at lower levels in rosette leaves and siliques.

It localises to the cytoplasm. The protein localises to the cytosol. The enzyme catalyses chorismate = prephenate. The protein operates within metabolic intermediate biosynthesis; prephenate biosynthesis; prephenate from chorismate: step 1/1. With respect to regulation, no allosteric regulation. This Arabidopsis thaliana (Mouse-ear cress) protein is Chorismate mutase 2.